A 135-amino-acid polypeptide reads, in one-letter code: Large-conductance mechanosensitive channel (135 aa).

The next 2 helical transmembrane spans lie at 10 to 30 and 76 to 96; these read FAMK…AAFG and GAFI…FCAI.

It belongs to the MscL family. Homopentamer.

The protein localises to the cell inner membrane. Functionally, channel that opens in response to stretch forces in the membrane lipid bilayer. May participate in the regulation of osmotic pressure changes within the cell. This chain is Large-conductance mechanosensitive channel, found in Proteus mirabilis (strain HI4320).